Consider the following 485-residue polypeptide: UDP-N-acetylmuramate--L-alanine ligase (485 aa).

129–135 is an ATP binding site; sequence GTHGKTT.

The protein belongs to the MurCDEF family.

The protein localises to the cytoplasm. The catalysed reaction is UDP-N-acetyl-alpha-D-muramate + L-alanine + ATP = UDP-N-acetyl-alpha-D-muramoyl-L-alanine + ADP + phosphate + H(+). It functions in the pathway cell wall biogenesis; peptidoglycan biosynthesis. Its function is as follows. Cell wall formation. The chain is UDP-N-acetylmuramate--L-alanine ligase from Vibrio campbellii (strain ATCC BAA-1116).